We begin with the raw amino-acid sequence, 279 residues long: Undecaprenyl-diphosphatase (279 aa).

The next 8 membrane-spanning stretches (helical) occupy residues 2–22 (LFIE…TEWL), 44–64 (AFME…VIVI), 85–105 (WQLW…AVPL), 113–133 (FNHM…FLWI), 163–183 (VLSI…AIIL), 188–208 (TVAA…YSGL), 225–245 (LLVL…VIKL), and 255–275 (FTVF…YSVF).

It belongs to the UppP family.

It is found in the cell membrane. It carries out the reaction di-trans,octa-cis-undecaprenyl diphosphate + H2O = di-trans,octa-cis-undecaprenyl phosphate + phosphate + H(+). Functionally, catalyzes the dephosphorylation of undecaprenyl diphosphate (UPP). Confers resistance to bacitracin. The chain is Undecaprenyl-diphosphatase from Streptococcus equi subsp. equi (strain 4047).